A 225-amino-acid chain; its full sequence is 2-C-methyl-D-erythritol 4-phosphate cytidylyltransferase (225 aa).

This sequence belongs to the IspD/TarI cytidylyltransferase family. IspD subfamily.

The catalysed reaction is 2-C-methyl-D-erythritol 4-phosphate + CTP + H(+) = 4-CDP-2-C-methyl-D-erythritol + diphosphate. The protein operates within isoprenoid biosynthesis; isopentenyl diphosphate biosynthesis via DXP pathway; isopentenyl diphosphate from 1-deoxy-D-xylulose 5-phosphate: step 2/6. Its function is as follows. Catalyzes the formation of 4-diphosphocytidyl-2-C-methyl-D-erythritol from CTP and 2-C-methyl-D-erythritol 4-phosphate (MEP). The sequence is that of 2-C-methyl-D-erythritol 4-phosphate cytidylyltransferase from Prochlorococcus marinus (strain NATL2A).